Consider the following 347-residue polypeptide: NADH-ubiquinone oxidoreductase chain 2 (347 aa).

Transmembrane regions (helical) follow at residues 3–23 (PMTSTILLMTIMSGTSIVLMS), 25–45 (HWFMTWLGFEMNMMAIIPILM), 59–79 (YFLTQATASMILVLAIIINLM), 96–116 (TLITIALVMKLGLAPFHFWVP), 122–142 (VSLSSGLILLTWQKIAPLSLL), 149–169 (INTNLLLTMSLLSIMIGGWGG), 178–198 (IMAYSSIAHMGWMIVIMIYNP), 200–220 (LSLLNLFIYIMMTSSMFMLLI), 240–260 (ITTMMMATLLSLGGLPPLTGF), 274–294 (NSVILPTLMAILALLNLFFYM), and 326–346 (MTMLISISTLALPLTPLFISL).

The protein belongs to the complex I subunit 2 family. In terms of assembly, core subunit of respiratory chain NADH dehydrogenase (Complex I) which is composed of 45 different subunits. Interacts with TMEM242.

It localises to the mitochondrion inner membrane. It catalyses the reaction a ubiquinone + NADH + 5 H(+)(in) = a ubiquinol + NAD(+) + 4 H(+)(out). Core subunit of the mitochondrial membrane respiratory chain NADH dehydrogenase (Complex I) which catalyzes electron transfer from NADH through the respiratory chain, using ubiquinone as an electron acceptor. Essential for the catalytic activity and assembly of complex I. The polypeptide is NADH-ubiquinone oxidoreductase chain 2 (Sylvisorex granti (Grant's forest shrew)).